A 198-amino-acid chain; its full sequence is Recombination protein RecR (198 aa).

The C4-type zinc finger occupies 57–72; the sequence is CSICGNLTESDPCAIC. The Toprim domain maps to 80–175; it reads TTILVVEESK…KVTRLARGLA (96 aa).

Belongs to the RecR family.

May play a role in DNA repair. It seems to be involved in an RecBC-independent recombinational process of DNA repair. It may act with RecF and RecO. The chain is Recombination protein RecR from Lactococcus lactis subsp. lactis (strain IL1403) (Streptococcus lactis).